The following is a 245-amino-acid chain: 1-(5-phosphoribosyl)-5-[(5-phosphoribosylamino)methylideneamino] imidazole-4-carboxamide isomerase (245 aa).

Asp-7 acts as the Proton acceptor in catalysis. Asp-129 serves as the catalytic Proton donor.

The protein belongs to the HisA/HisF family.

It is found in the cytoplasm. The catalysed reaction is 1-(5-phospho-beta-D-ribosyl)-5-[(5-phospho-beta-D-ribosylamino)methylideneamino]imidazole-4-carboxamide = 5-[(5-phospho-1-deoxy-D-ribulos-1-ylimino)methylamino]-1-(5-phospho-beta-D-ribosyl)imidazole-4-carboxamide. Its pathway is amino-acid biosynthesis; L-histidine biosynthesis; L-histidine from 5-phospho-alpha-D-ribose 1-diphosphate: step 4/9. The sequence is that of 1-(5-phosphoribosyl)-5-[(5-phosphoribosylamino)methylideneamino] imidazole-4-carboxamide isomerase from Edwardsiella ictaluri (strain 93-146).